Reading from the N-terminus, the 343-residue chain is MCKMYKVVETDASPGQRSVLQLVKDLLILSRFHKYNPWLAVFSGGVSLPILIGNSHPLTSGVSVWATLLAGANQIATHPASISADHIVKQTLLCLICGYIFCGAGMVWNDWIDRNIDKNVARTKNRPLAAGRVTATEGFIWMMVHVAAMIPVTISTILYPFGKRQLCRRLYIYPQYFLGFSLAWPGAIGWMAIKGRQIPFTQSISESLPLSITVFTWTLYLNTAYSYQDVVDDSKMNVNSAYVAAGSRIHMFLVILAGLVLGSLYLQLRAQNSGWLWASWMCVWALSFVHQLLRFDAKKPESGGPLHKENFALGVWTIVACAAELGLSSGMADQFFSNRVFRR.

Helical transmembrane passes span 38 to 58 (WLAV…SHPL), 62 to 82 (VSVW…PASI), 92 to 112 (LLCL…NDWI), 138 to 158 (GFIW…STIL), 170 to 190 (LYIY…AIGW), 241 to 261 (AYVA…GLVL), 273 to 293 (SGWL…HQLL), and 311 to 331 (FALG…SSGM).

The protein belongs to the UbiA prenyltransferase family. Requires Mg(2+) as cofactor.

The protein resides in the membrane. The catalysed reaction is triacetate lactone + (2E,6E,10E)-geranylgeranyl diphosphate = (2E,6E,10E)-geranylgeranyl-triacetate lactone + diphosphate. The protein operates within secondary metabolite biosynthesis; terpenoid biosynthesis. Polyprenyl transferase; part of the gene cluster that mediates the biosynthesis of meroterpenoids called sartorypyrones. Within the pathway, spyF catalyzes the prenylation of triacetic acid lactone (TAL) to produce geranylgeranyl-triacetate lactone. The biosynthesis of sartorypyrones begins with the production of triacetic acid lactone (TAL) by the NR-PKS spyA using one molecule of acetyl-CoA and two molecules of malonyl-CoA. The prenyltransferase spyF then conjugates geranylgeranyl pyrophosphate (GGPP) to TAL to form geranylgeranyl-triacetate lactone, for which the pathway-specific geranylgeranyl pyrophosphate synthase (GGPS) spyE is required to provide GGPP. Subsequently, geranylgeranyl-triacetate lactone is epoxidized at the terminal olein by the FAD-dependent monooxygenase spyC, followed by cyclization of the terpenoid component catalyzed by the terpene cyclase spyD to produce both the bicyclic sartorypyrone F and the monocyclic sartorypyrone D. Finally, the last step of the biosynthesis involves the acetylation of the meroterpenoids sartorypyrones D and F by the acetyltransferase SpyB to produce sartorypyrones A and G, respectively. The chain is Polyprenyl transferase spyF from Aspergillus fumigatus (strain ATCC MYA-4609 / CBS 101355 / FGSC A1100 / Af293) (Neosartorya fumigata).